The primary structure comprises 317 residues: Beta-ketoacyl-[acyl-carrier-protein] synthase III (317 aa).

Catalysis depends on residues C112 and H244. Positions 245 to 249 are ACP-binding; it reads QANLR. Residue N274 is part of the active site.

Belongs to the thiolase-like superfamily. FabH family. Homodimer.

The protein localises to the cytoplasm. The catalysed reaction is malonyl-[ACP] + acetyl-CoA + H(+) = 3-oxobutanoyl-[ACP] + CO2 + CoA. It participates in lipid metabolism; fatty acid biosynthesis. In terms of biological role, catalyzes the condensation reaction of fatty acid synthesis by the addition to an acyl acceptor of two carbons from malonyl-ACP. Catalyzes the first condensation reaction which initiates fatty acid synthesis and may therefore play a role in governing the total rate of fatty acid production. Possesses both acetoacetyl-ACP synthase and acetyl transacylase activities. Its substrate specificity determines the biosynthesis of branched-chain and/or straight-chain of fatty acids. The chain is Beta-ketoacyl-[acyl-carrier-protein] synthase III from Blochmanniella pennsylvanica (strain BPEN).